We begin with the raw amino-acid sequence, 527 residues long: GMP synthase [glutamine-hydrolyzing] (527 aa).

The region spanning 4 to 202 (KILILDFGSQ…VLQICGARAD (199 aa)) is the Glutamine amidotransferase type-1 domain. Catalysis depends on Cys81, which acts as the Nucleophile. Active-site residues include His176 and Glu178. The 193-residue stretch at 203–395 (WEMGNYIDEA…LGLPPAMVYR (193 aa)) folds into the GMPS ATP-PPase domain. 230 to 236 (SGGVDSS) provides a ligand contact to ATP.

As to quaternary structure, homodimer.

It carries out the reaction XMP + L-glutamine + ATP + H2O = GMP + L-glutamate + AMP + diphosphate + 2 H(+). It functions in the pathway purine metabolism; GMP biosynthesis; GMP from XMP (L-Gln route): step 1/1. Catalyzes the synthesis of GMP from XMP. This chain is GMP synthase [glutamine-hydrolyzing], found in Paraburkholderia phytofirmans (strain DSM 17436 / LMG 22146 / PsJN) (Burkholderia phytofirmans).